The sequence spans 81 residues: Small ribosomal subunit protein bS18 (81 aa).

Belongs to the bacterial ribosomal protein bS18 family. As to quaternary structure, part of the 30S ribosomal subunit. Forms a tight heterodimer with protein bS6.

In terms of biological role, binds as a heterodimer with protein bS6 to the central domain of the 16S rRNA, where it helps stabilize the platform of the 30S subunit. This is Small ribosomal subunit protein bS18 from Chlamydia trachomatis serovar L2 (strain ATCC VR-902B / DSM 19102 / 434/Bu).